The chain runs to 143 residues: 3-dehydroquinate dehydratase (143 aa).

The active-site Proton acceptor is the Tyr-23. Asn-74, His-80, and Asp-87 together coordinate substrate. Catalysis depends on His-100, which acts as the Proton donor. Substrate contacts are provided by residues 101-102 (IS) and Arg-111.

It belongs to the type-II 3-dehydroquinase family. As to quaternary structure, homododecamer.

It catalyses the reaction 3-dehydroquinate = 3-dehydroshikimate + H2O. It participates in metabolic intermediate biosynthesis; chorismate biosynthesis; chorismate from D-erythrose 4-phosphate and phosphoenolpyruvate: step 3/7. Its function is as follows. Catalyzes a trans-dehydration via an enolate intermediate. The chain is 3-dehydroquinate dehydratase from Endomicrobium trichonymphae.